The primary structure comprises 131 residues: Small ribosomal subunit protein uS19 (131 aa).

Belongs to the universal ribosomal protein uS19 family.

In terms of biological role, protein S19 forms a complex with S13 that binds strongly to the 16S ribosomal RNA. In Nitrosopumilus maritimus (strain SCM1), this protein is Small ribosomal subunit protein uS19.